Consider the following 803-residue polypeptide: Isoamylase 1, chloroplastic (803 aa).

The transit peptide at 1–54 directs the protein to the chloroplast; it reads MASLPHCLSARPLVVAAAPGRPGPGPGPWLRGGARRRNAAFSAGNAGRRVGLRR. The Nucleophile role is filled by aspartate 432. Glutamate 488 functions as the Proton donor in the catalytic mechanism.

It belongs to the glycosyl hydrolase 13 family. Forms a homo-pentamer and a hetero-hexamer composed of five ISA1 and one ISA2. Interacts with FLO6/SIP4. As to expression, highly expressed in developing endosperm. Expressed at low levels in leaves.

The protein resides in the plastid. Its subcellular location is the chloroplast. It carries out the reaction Hydrolysis of (1-&gt;6)-alpha-D-glucosidic branch linkages in glycogen, amylopectin and their beta-limit dextrins.. It participates in glycan biosynthesis; starch biosynthesis. Inhibited by copper chloride, mercury chloride, ammonium molybdate and para-chloromercuribenzoate. Starch-debranching enzyme involved in amylopectin biosynthesis in endosperm. Functions by removing excess branches or improper branches that interfere with the formation of double helices of the cluster chains of amylopectin and crystallization of starch. Works as ISA1 homooligomer or together with ISA2 as heterooligomer. The heterooligomer ISA1 and ISA2 possesses higher affinity than the ISA1 homooligomer for various branched polyglucans in vitro, but no marked differences exist in chain preferences for debranching of amylopectin and phytoglycogen between these forms. In Oryza sativa subsp. japonica (Rice), this protein is Isoamylase 1, chloroplastic.